Reading from the N-terminus, the 535-residue chain is MRLAFWLYEGTALHGISRVTNSMKGVHTVYHAPQGDDYITATYTMLERTPQFPGLSISVVRGRDLAQGVSRLPSTLQQVEHHYHPELIVIAPSCSTALLQEDLHQLAAHSGLPQEKILVYALNPFRVSENEAADGLLTELVKRFASPQEKTAQPSVNLLGFTSLGFHLRANLTSIRRMLQTLGIAVNVVAPWGASIDDLRKLPAAWLNIAPYREIGSTAAEYLADAFAMPALYEAPIGVEPTLAWLRSLIEKLNAAGAERGVAPIVMPQLNAFSLDGLSAPSGVPWFARTADMESFSNKRAFVFGDATHTVALVKFLRDELGMQIIGAGTYLERHADWVRKELEGYLPGALIVTDKFQDVAQIIDDQMPDLVCGTQMERHSCRKLDVPCMVVCPPTHIENHLLGYYPFFGFDGADVIADRVYLSCKLGLEKHLIDFFGDAGLEYEEPEVSAPSEEPVALSVAPNDHPSPEAAAEAVVIAEEGEMKWSDEAETMLKKVPFFVRKKVRKNTETFARASGASMISVDVFRQAKESLGG.

Asp36 provides a ligand contact to [4Fe-4S] cluster. Catalysis depends on Asp292, which acts as the Proton donor. 428–429 (GL) lines the substrate pocket.

Belongs to the ChlB/BchB/BchZ family. As to quaternary structure, protochlorophyllide reductase is composed of three subunits; BchL, BchN and BchB. Forms a heterotetramer of two BchB and two BchN subunits. The cofactor is [4Fe-4S] cluster.

It carries out the reaction chlorophyllide a + oxidized 2[4Fe-4S]-[ferredoxin] + 2 ADP + 2 phosphate = protochlorophyllide a + reduced 2[4Fe-4S]-[ferredoxin] + 2 ATP + 2 H2O. It participates in porphyrin-containing compound metabolism; bacteriochlorophyll biosynthesis (light-independent). In terms of biological role, component of the dark-operative protochlorophyllide reductase (DPOR) that uses Mg-ATP and reduced ferredoxin to reduce ring D of protochlorophyllide (Pchlide) to form chlorophyllide a (Chlide). This reaction is light-independent. The NB-protein (BchN-BchB) is the catalytic component of the complex. In Pelodictyon phaeoclathratiforme (strain DSM 5477 / BU-1), this protein is Light-independent protochlorophyllide reductase subunit B.